The following is a 164-amino-acid chain: NADH-quinone oxidoreductase subunit I (164 aa).

4Fe-4S ferredoxin-type domains lie at L55–E85 and T95–N124. [4Fe-4S] cluster contacts are provided by C65, C68, C71, C75, C104, C107, C110, and C114.

This sequence belongs to the complex I 23 kDa subunit family. In terms of assembly, NDH-1 is composed of 14 different subunits. Subunits NuoA, H, J, K, L, M, N constitute the membrane sector of the complex. The cofactor is [4Fe-4S] cluster.

It is found in the cell inner membrane. The catalysed reaction is a quinone + NADH + 5 H(+)(in) = a quinol + NAD(+) + 4 H(+)(out). Functionally, NDH-1 shuttles electrons from NADH, via FMN and iron-sulfur (Fe-S) centers, to quinones in the respiratory chain. The immediate electron acceptor for the enzyme in this species is believed to be ubiquinone. Couples the redox reaction to proton translocation (for every two electrons transferred, four hydrogen ions are translocated across the cytoplasmic membrane), and thus conserves the redox energy in a proton gradient. This Roseobacter denitrificans (strain ATCC 33942 / OCh 114) (Erythrobacter sp. (strain OCh 114)) protein is NADH-quinone oxidoreductase subunit I.